Reading from the N-terminus, the 150-residue chain is 3-dehydroquinate dehydratase (150 aa).

The Proton acceptor role is filled by Tyr-26. 3 residues coordinate substrate: Asn-77, His-83, and Asp-90. The Proton donor role is filled by His-103. Residues Leu-104 to Ser-105 and Arg-114 contribute to the substrate site.

It belongs to the type-II 3-dehydroquinase family. In terms of assembly, homododecamer.

It carries out the reaction 3-dehydroquinate = 3-dehydroshikimate + H2O. The protein operates within metabolic intermediate biosynthesis; chorismate biosynthesis; chorismate from D-erythrose 4-phosphate and phosphoenolpyruvate: step 3/7. Its function is as follows. Catalyzes a trans-dehydration via an enolate intermediate. The protein is 3-dehydroquinate dehydratase of Histophilus somni (strain 129Pt) (Haemophilus somnus).